Here is a 592-residue protein sequence, read N- to C-terminus: MSNHAWILLGIFLVVLLLTVKPLGTYIANVMEGRFRLAGKIESPIYRLCGIRPDEEMGWLKYACAILLFNVLGVLAVYALQRLQAELPLNPQVFPAVSPDSAFNTAISFATNTNWQGYVGEATMSYLTQMLALAVQNFFSAATGIVVVIALIRGFARHTAKTFGNAWVDLTRITLHVLLPISIIYAVFLTGQGVIQNFNAYKDVTTLEVTSFDNPKLDDAGQPLKDDKGAVVTEPAQTQTQTLAMGPVASQEAIKMLGTNGGGFMNANSAHPYENPTPLSNFIQMLSIFLIPAALCFTFGRIVGDTRQGWAVLAAMTLMFVALAYTAMHFEQQANPLLTQLGVDPASGNMEGKETRFGIGDSGLFATITTLASCGAVNAMHDSFTPLGGLVPLIDMQLGEVVFGGVGTGLYGMLVFAIMAVFIAGLMIGRTPEYLGKKIEAFEMKMVSIAILVTPLLVLVGTAIAVMLADGKAGIANPGAHGFSEILYAFTSAANNNGSAFAGLSANTPFYNVMLGIAMWFGRFGVIVPVLAIAGSLAAKKRIAVGAGTLPTHGPLFVTLLIGTVLLVGLLNYVPALALGPVIEHLVLWAAH.

Helical transmembrane passes span 7 to 27 (ILLGIFLVVLLLTVKPLGTYI), 60 to 80 (LKYACAILLFNVLGVLAVYAL), 132 to 152 (ALAVQNFFSAATGIVVVIALI), 175 to 195 (LHVLLPISIIYAVFLTGQGVI), 279 to 299 (LSNFIQMLSIFLIPAALCFTF), 310 to 330 (WAVLAAMTLMFVALAYTAMHF), 409 to 429 (GLYGMLVFAIMAVFIAGLMIG), 449 to 469 (IAILVTPLLVLVGTAIAVMLA), 513 to 533 (VMLGIAMWFGRFGVIVPVLAI), and 556 to 576 (LFVTLLIGTVLLVGLLNYVPA).

It belongs to the KdpA family. The system is composed of three essential subunits: KdpA, KdpB and KdpC.

It is found in the cell inner membrane. Its function is as follows. Part of the high-affinity ATP-driven potassium transport (or Kdp) system, which catalyzes the hydrolysis of ATP coupled with the electrogenic transport of potassium into the cytoplasm. This subunit binds the periplasmic potassium ions and delivers the ions to the membrane domain of KdpB through an intramembrane tunnel. This is Potassium-transporting ATPase potassium-binding subunit from Dechloromonas aromatica (strain RCB).